A 747-amino-acid polypeptide reads, in one-letter code: Mediator of RNA polymerase II transcription subunit 25 (747 aa).

Residues 1–226 (MVPGSEGPAR…PRHMVLVRGL (226 aa)) form an interaction with the Mediator complex region. Disordered stretches follow at residues 233 to 274 (GSAP…QYQV) and 299 to 390 (LGPR…PALG). Composition is skewed to pro residues over residues 263 to 272 (QPLPPVPPQY) and 326 to 342 (PQLP…PPAS). An interaction with VP16 region spans residues 389-543 (LGGQQSVSNK…VNGIRQVITN (155 aa)). Residues 395–545 (VSNKLLAWSG…GIRQVITNHK (151 aa)) are interaction with CREBBP. Residues 548–747 (QQQKLEQQQR…MEDDILMDLI (200 aa)) form a disordered region. 2 interaction with RARA regions span residues 564–653 (APPG…LLNP) and 640–707 (PGAN…WPAQ). A compositionally biased stretch (low complexity) spans 598–611 (ASGATGQPQPQGTA). Residues 612 to 634 (QPPPGAPQGPPGAASGPPPPGPI) show a composition bias toward pro residues. Residues 646–650 (LRSLL) carry the LXXLL motif motif. 3 stretches are compositionally biased toward pro residues: residues 652 to 664 (NPPP…PPPQ), 673 to 683 (PGAPALLPPPH), and 691 to 713 (LGPP…PRAP). Arginine 725 is subject to Asymmetric dimethylarginine. Residues 738–747 (MEDDILMDLI) are compositionally biased toward acidic residues.

It belongs to the Mediator complex subunit 25 family. Component of the Mediator complex, which is composed of MED1, MED4, MED6, MED7, MED8, MED9, MED10, MED11, MED12, MED13, MED13L, MED14, MED15, MED16, MED17, MED18, MED19, MED20, MED21, MED22, MED23, MED24, MED25, MED26, MED27, MED29, MED30, MED31, CCNC, CDK8 and CDC2L6/CDK11. The MED12, MED13, CCNC and CDK8 subunits form a distinct module termed the CDK8 module. Mediator containing the CDK8 module is less active than Mediator lacking this module in supporting transcriptional activation. Individual preparations of the Mediator complex lacking one or more distinct subunits have been variously termed ARC, CRSP, DRIP, PC2, SMCC and TRAP. Interacts with CREBBP. Interacts with ESR1, GR, RARA, RXRA and THRB in a ligand-dependent fashion. Binds the Herpes simplex virus activator VP16. As to expression, ubiquitously expressed. Highest levels in brain, heart, kidney, peripheral leukocytes, placenta, skeletal muscle and spleen.

It is found in the nucleus. Functionally, component of the Mediator complex, a coactivator involved in the regulated transcription of nearly all RNA polymerase II-dependent genes. Mediator functions as a bridge to convey information from gene-specific regulatory proteins to the basal RNA polymerase II transcription machinery. Mediator is recruited to promoters by direct interactions with regulatory proteins and serves as a scaffold for the assembly of a functional preinitiation complex with RNA polymerase II and the general transcription factors. Required for RARA/RXRA-mediated transcription. The sequence is that of Mediator of RNA polymerase II transcription subunit 25 (MED25) from Homo sapiens (Human).